Consider the following 642-residue polypeptide: Threonine--tRNA ligase (642 aa).

One can recognise a TGS domain in the interval methionine 1 to threonine 61. The segment at aspartate 243–proline 534 is catalytic. 3 residues coordinate Zn(2+): cysteine 334, histidine 385, and histidine 511.

This sequence belongs to the class-II aminoacyl-tRNA synthetase family. As to quaternary structure, homodimer. Requires Zn(2+) as cofactor.

The protein localises to the cytoplasm. The enzyme catalyses tRNA(Thr) + L-threonine + ATP = L-threonyl-tRNA(Thr) + AMP + diphosphate + H(+). Functionally, catalyzes the attachment of threonine to tRNA(Thr) in a two-step reaction: L-threonine is first activated by ATP to form Thr-AMP and then transferred to the acceptor end of tRNA(Thr). Also edits incorrectly charged L-seryl-tRNA(Thr). This chain is Threonine--tRNA ligase, found in Histophilus somni (strain 2336) (Haemophilus somnus).